Reading from the N-terminus, the 375-residue chain is 4-hydroxy-3-methylbut-2-en-1-yl diphosphate synthase (flavodoxin) (375 aa).

[4Fe-4S] cluster-binding residues include Cys270, Cys273, Cys305, and Glu312.

This sequence belongs to the IspG family. [4Fe-4S] cluster serves as cofactor.

It carries out the reaction (2E)-4-hydroxy-3-methylbut-2-enyl diphosphate + oxidized [flavodoxin] + H2O + 2 H(+) = 2-C-methyl-D-erythritol 2,4-cyclic diphosphate + reduced [flavodoxin]. The protein operates within isoprenoid biosynthesis; isopentenyl diphosphate biosynthesis via DXP pathway; isopentenyl diphosphate from 1-deoxy-D-xylulose 5-phosphate: step 5/6. Converts 2C-methyl-D-erythritol 2,4-cyclodiphosphate (ME-2,4cPP) into 1-hydroxy-2-methyl-2-(E)-butenyl 4-diphosphate. This Shigella flexneri serotype 5b (strain 8401) protein is 4-hydroxy-3-methylbut-2-en-1-yl diphosphate synthase (flavodoxin).